The primary structure comprises 77 residues: Putative sulfur carrier protein YedF (77 aa).

Cysteine 17 functions as the Cysteine persulfide intermediate in the catalytic mechanism.

This sequence belongs to the sulfur carrier protein TusA family.

The protein is Putative sulfur carrier protein YedF (yedF) of Escherichia coli O157:H7.